The following is a 245-amino-acid chain: Phosphoribosylaminoimidazole-succinocarboxamide synthase (245 aa).

The protein belongs to the SAICAR synthetase family.

It catalyses the reaction 5-amino-1-(5-phospho-D-ribosyl)imidazole-4-carboxylate + L-aspartate + ATP = (2S)-2-[5-amino-1-(5-phospho-beta-D-ribosyl)imidazole-4-carboxamido]succinate + ADP + phosphate + 2 H(+). The protein operates within purine metabolism; IMP biosynthesis via de novo pathway; 5-amino-1-(5-phospho-D-ribosyl)imidazole-4-carboxamide from 5-amino-1-(5-phospho-D-ribosyl)imidazole-4-carboxylate: step 1/2. The polypeptide is Phosphoribosylaminoimidazole-succinocarboxamide synthase (Nostoc punctiforme (strain ATCC 29133 / PCC 73102)).